The sequence spans 254 residues: Ribosomal RNA small subunit methyltransferase G (254 aa).

S-adenosyl-L-methionine-binding positions include Gly-84, Phe-89, 136–137 (VE), and Arg-155. Positions 231-254 (HLYPRAVGIPSKQPLGIQADDNRS) are disordered.

The protein belongs to the methyltransferase superfamily. RNA methyltransferase RsmG family.

The protein resides in the cytoplasm. Specifically methylates the N7 position of a guanine in 16S rRNA. This is Ribosomal RNA small subunit methyltransferase G from Synechococcus sp. (strain WH7803).